The following is an 87-amino-acid chain: Large ribosomal subunit protein bL31B (87 aa).

It belongs to the bacterial ribosomal protein bL31 family. Type B subfamily. As to quaternary structure, part of the 50S ribosomal subunit.

This Halorhodospira halophila (strain DSM 244 / SL1) (Ectothiorhodospira halophila (strain DSM 244 / SL1)) protein is Large ribosomal subunit protein bL31B.